Reading from the N-terminus, the 1010-residue chain is Plasma membrane ATPase 2 (1010 aa).

Basic and acidic residues predominate over residues 1–14 (MQRNNGEGRPEGMH). 2 disordered regions span residues 1-126 (MQRN…EDED) and 139-165 (QDQE…PEEL). Topologically, residues 1-201 (MQRNNGEGRP…KEEKTNNIKK (201 aa)) are cytoplasmic. A compositionally biased stretch (polar residues) spans 25–34 (FKNNASPQDD). Residues 42–52 (YEEGGVEDSAV) are compositionally biased toward acidic residues. The segment covering 68–106 (APNTHAQQANLQSGNTSITHETQSTSRGQEATTSPSLSA) has biased composition (polar residues). Positions 140–151 (DQEEEQVEEEES) are enriched in acidic residues. A helical transmembrane segment spans residues 202–222 (FLSFFVGPIQFVMELAAALAA). Topologically, residues 223-226 (GLRD) are extracellular. A helical membrane pass occupies residues 227 to 246 (WVDFGVICALLLLNATVGFV). The Cytoplasmic portion of the chain corresponds to 247–377 (QEYQAGSIVD…SQGHFTEVLN (131 aa)). The helical transmembrane segment at 378 to 399 (GIGTILLVLVILTLLCIYTAAF) threads the bilayer. The Extracellular portion of the chain corresponds to 400–410 (YRSVRLAALLE). The helical transmembrane segment at 411–433 (YTLAITIIGVPVGLPAVVTTTMA) threads the bilayer. At 434-805 (VGAAYLAKKK…LIIRNQLLNL (372 aa)) the chain is on the cytoplasmic side. The 4-aspartylphosphate intermediate role is filled by D464. 2 residues coordinate Mg(2+): D720 and D724. A helical transmembrane segment spans residues 806-824 (ELIVFIAIFADVATLAIAY). Residues 825-840 (DNAPYAMKPVKWNLPR) lie on the Extracellular side of the membrane. A helical membrane pass occupies residues 841–860 (LWGLATIVGILLAIGTWIVN). Topologically, residues 861–912 (TTMIAQGQNRGIVQNFGVQDEVLFLQISLTENWLIFITRCSGPFWSSFPSWQ) are cytoplasmic. Residues 913-933 (LSGAVLVVDILATLFCIFGWF) form a helical membrane-spanning segment. The Extracellular portion of the chain corresponds to 934–946 (KGGHQTSIVAVIR). The chain crosses the membrane as a helical span at residues 947 to 963 (IWMYSFGIFCLIAGVYY). At 964–1010 (ILSESSSFDRWMHGKHKERGTTRKLEDFVMQLQRTSTHHEAEGKVTS) the chain is on the cytoplasmic side.

It belongs to the cation transport ATPase (P-type) (TC 3.A.3) family. Type IIIA subfamily. In terms of processing, in addition to transient phosphorylation of the active site Asp residue, this protein, but not the product of the pma1 locus, is phosphorylated efficiently in isolated plasma membrane.

It is found in the cell membrane. The catalysed reaction is ATP + H2O + H(+)(in) = ADP + phosphate + 2 H(+)(out). Its function is as follows. The plasma membrane ATPase of plants and fungi is a hydrogen ion pump. The proton gradient it generates drives the active transport of nutrients by H(+)-symport. The resulting external acidification and/or internal alkinization may mediate growth responses. In Schizosaccharomyces pombe (strain 972 / ATCC 24843) (Fission yeast), this protein is Plasma membrane ATPase 2 (pma2).